The chain runs to 182 residues: Bifunctional protein PyrR (182 aa).

A PRPP-binding motif is present at residues 99–111; the sequence is VILVDDVLYTGRT.

Belongs to the purine/pyrimidine phosphoribosyltransferase family. PyrR subfamily. As to quaternary structure, homodimer and homohexamer; in equilibrium.

It catalyses the reaction UMP + diphosphate = 5-phospho-alpha-D-ribose 1-diphosphate + uracil. Functionally, regulates transcriptional attenuation of the pyrimidine nucleotide (pyr) operon by binding in a uridine-dependent manner to specific sites on pyr mRNA. This disrupts an antiterminator hairpin in the RNA and favors formation of a downstream transcription terminator, leading to a reduced expression of downstream genes. In terms of biological role, also displays a weak uracil phosphoribosyltransferase activity which is not physiologically significant. In Alkaliphilus metalliredigens (strain QYMF), this protein is Bifunctional protein PyrR.